Here is a 438-residue protein sequence, read N- to C-terminus: Adenosylhomocysteinase (438 aa).

3 residues coordinate substrate: Thr-64, Asp-139, and Glu-164. 165-167 (TTT) serves as a coordination point for NAD(+). 2 residues coordinate substrate: Lys-194 and Asp-198. NAD(+)-binding positions include Asn-199, 228–233 (GYGDVG), Glu-251, Asn-286, 307–309 (IGH), and Asn-352.

Belongs to the adenosylhomocysteinase family. Requires NAD(+) as cofactor.

It localises to the cytoplasm. The enzyme catalyses S-adenosyl-L-homocysteine + H2O = L-homocysteine + adenosine. Its pathway is amino-acid biosynthesis; L-homocysteine biosynthesis; L-homocysteine from S-adenosyl-L-homocysteine: step 1/1. May play a key role in the regulation of the intracellular concentration of adenosylhomocysteine. In Coxiella burnetii (strain CbuK_Q154) (Coxiella burnetii (strain Q154)), this protein is Adenosylhomocysteinase.